A 402-amino-acid chain; its full sequence is Selenoprotein P (402 aa).

A signal peptide spans 1-19; that stretch reads MWRGLGLALALCLLLTGGT. Position 59 (selenocysteine 59) is a non-standard amino acid, selenocysteine. N-linked (GlcNAc...) asparagine glycans are attached at residues asparagine 83 and asparagine 174. Residues 196–291 are disordered; sequence KTAEASQRHH…VGSESLQPSL (96 aa). A compositionally biased stretch (basic residues) spans 203–231; that stretch reads RHHHPHPHSHPHPHPHPHPHPHPHPHHGH. 13 repeat units span residues 204-205, 206-207, 208-209, 210-211, 212-213, 214-215, 216-217, 218-219, 220-221, 222-223, 224-225, 226-227, and 228-229. The 13 X 2 AA tandem repeats of H-[PHS] stretch occupies residues 204-229; that stretch reads HHHPHPHSHPHPHPHPHPHPHPHPHH. The segment covering 232 to 247 has biased composition (basic and acidic residues); that stretch reads QLHENAHLSESPKPDT. Positions 259-269 are enriched in basic residues; sequence LHHHHHRHKGP. Residue serine 284 is modified to Phosphoserine. 11 non-standard amino acids (selenocysteine) are found at residues selenocysteine 297, selenocysteine 307, selenocysteine 338, selenocysteine 350, selenocysteine 363, selenocysteine 365, selenocysteine 372, selenocysteine 388, selenocysteine 390, selenocysteine 397, and selenocysteine 399. A disordered region spans residues 367–402; sequence LPPAAUQAAGQQLNPTEASTKUSUKNKAKMUKUPSN.

It belongs to the selenoprotein P family. Post-translationally, phosphorylation sites are present in the extracellular medium. Brain and kidney. Most prominently expressed in the cerebellar cortex, hippocampus and olfactory bulb.

It localises to the secreted. In terms of biological role, constitutes a major selenium pool in the brain and may play an important role in developing and/or modulating the morphology of neurons and/or glial cells. The sequence is that of Selenoprotein P from Bos taurus (Bovine).